Reading from the N-terminus, the 954-residue chain is Glycine dehydrogenase (decarboxylating) (954 aa).

Residue K701 is modified to N6-(pyridoxal phosphate)lysine.

The protein belongs to the GcvP family. As to quaternary structure, the glycine cleavage system is composed of four proteins: P, T, L and H. Pyridoxal 5'-phosphate is required as a cofactor.

The enzyme catalyses N(6)-[(R)-lipoyl]-L-lysyl-[glycine-cleavage complex H protein] + glycine + H(+) = N(6)-[(R)-S(8)-aminomethyldihydrolipoyl]-L-lysyl-[glycine-cleavage complex H protein] + CO2. In terms of biological role, the glycine cleavage system catalyzes the degradation of glycine. The P protein binds the alpha-amino group of glycine through its pyridoxal phosphate cofactor; CO(2) is released and the remaining methylamine moiety is then transferred to the lipoamide cofactor of the H protein. This Bordetella pertussis (strain Tohama I / ATCC BAA-589 / NCTC 13251) protein is Glycine dehydrogenase (decarboxylating).